Consider the following 122-residue polypeptide: Secreted RxLR effector protein RXLR-C251 (122 aa).

The N-terminal stretch at 1-24 is a signal peptide; that stretch reads MRFFYKLALMTTVASLACSDTALA. Positions 48 to 51 match the RxLR motif; it reads RSLR.

This sequence belongs to the RxLR effector family.

It localises to the secreted. Its subcellular location is the host cytoplasm. The protein resides in the host nucleus. Functionally, secreted effector that does not suppress pattern-triggered immunity (PTI) in plant host. This is Secreted RxLR effector protein RXLR-C251 from Plasmopara halstedii (Downy mildew of sunflower).